The following is a 528-amino-acid chain: Nucleolar GTP-binding protein 1 (528 aa).

The OBG-type G domain maps to 168 to 335; that stretch reads RTLLVCGFPN…VKAMACDLLL (168 aa). Residues 174-181, 220-224, and 287-290 each bind GTP; these read GFPNVGKS, DTPGI, and SKSD. A disordered region spans residues 470-528; that stretch reads PDSWKHRSRNSGGDIAVHVRRDSKTQVAQPPRLPSKKKARFDDKHYYDRKPKHLYRGRK. The span at 509-518 shows a compositional bias: basic and acidic residues; that stretch reads RFDDKHYYDR. A compositionally biased stretch (basic residues) spans 519-528; that stretch reads KPKHLYRGRK.

It belongs to the TRAFAC class OBG-HflX-like GTPase superfamily. OBG GTPase family. NOG subfamily.

The protein resides in the nucleus. It is found in the nucleolus. In terms of biological role, involved in the biogenesis of the 60S ribosomal subunit. The protein is Nucleolar GTP-binding protein 1 (NOG1) of Encephalitozoon cuniculi (strain GB-M1) (Microsporidian parasite).